We begin with the raw amino-acid sequence, 375 residues long: o-succinylbenzoate synthase (375 aa).

K166 (proton donor) is an active-site residue. D191, E216, and D241 together coordinate Mg(2+). K265 acts as the Proton acceptor in catalysis.

This sequence belongs to the mandelate racemase/muconate lactonizing enzyme family. MenC type 2 subfamily. As to quaternary structure, homotetramer. It depends on a divalent metal cation as a cofactor.

The catalysed reaction is (1R,6R)-6-hydroxy-2-succinyl-cyclohexa-2,4-diene-1-carboxylate = 2-succinylbenzoate + H2O. The enzyme catalyses N-acetyl-D-methionine = N-acetyl-L-methionine. It participates in quinol/quinone metabolism; 1,4-dihydroxy-2-naphthoate biosynthesis; 1,4-dihydroxy-2-naphthoate from chorismate: step 4/7. It functions in the pathway quinol/quinone metabolism; menaquinone biosynthesis. In terms of biological role, converts 2-succinyl-6-hydroxy-2,4-cyclohexadiene-1-carboxylate (SHCHC) to 2-succinylbenzoate (OSB). Also acts as a N-succinylamino acid racemase (NSAR) that catalyzes the racemization of N-succinyl-D/L-phenylalanine. Can catalyze the racemization of a broad range of N-acylamino acids, including N-acetyl-D-methionine, N-formyl-D/L-methionine, N-formyl-D/L-norleucine, N-formyl-D/L-aminobutyric acid, N-formyl-D/L-norvaline, N-formyl-D/L-homophenylalanine, N-carbamoyl-D-methionine and N-carbamoyl-D-norleucine. May be a bifunctional enzyme involved in menaquinone biosynthesis and in an irreversible pathway for the conversion of D- to L-amino acids, thereby facilitating the survival and/or growth of the organism. The chain is o-succinylbenzoate synthase from Geobacillus stearothermophilus (Bacillus stearothermophilus).